Consider the following 183-residue polypeptide: Segregation and condensation protein B (183 aa).

This sequence belongs to the ScpB family. Homodimer. Homodimerization may be required to stabilize the binding of ScpA to the Smc head domains. Component of a cohesin-like complex composed of ScpA, ScpB and the Smc homodimer, in which ScpA and ScpB bind to the head domain of Smc. The presence of the three proteins is required for the association of the complex with DNA.

It localises to the cytoplasm. Participates in chromosomal partition during cell division. May act via the formation of a condensin-like complex containing Smc and ScpA that pull DNA away from mid-cell into both cell halves. The protein is Segregation and condensation protein B of Streptococcus pyogenes serotype M12 (strain MGAS2096).